Here is a 682-residue protein sequence, read N- to C-terminus: Potassium-transporting ATPase ATP-binding subunit (682 aa).

The next 4 helical transmembrane spans lie at 34-54, 62-82, 219-239, and 254-274; these read PVMFIVWIGSLLTTCISIAMA, ALFSAAISGWLWITVLFANFA, IALTILLIALTIVFLLATATL, and VLVALLVCLIPTTIGGLLSAI. The active-site 4-aspartylphosphate intermediate is aspartate 307. ATP-binding positions include aspartate 344, glutamate 348, 377 to 384, and lysine 395; that span reads FTAQSRMS. The Mg(2+) site is built by aspartate 518 and aspartate 522. A run of 3 helical transmembrane segments spans residues 588–608, 616–636, and 656–676; these read FAIIPAAFAATYPQLNALNIM, AILSAVIFNALIIVFLIPLAL, and IYGLGGLLVPFIGIKVIDLLL.

The protein belongs to the cation transport ATPase (P-type) (TC 3.A.3) family. Type IA subfamily. In terms of assembly, the system is composed of three essential subunits: KdpA, KdpB and KdpC.

The protein localises to the cell inner membrane. It carries out the reaction K(+)(out) + ATP + H2O = K(+)(in) + ADP + phosphate + H(+). Its function is as follows. Part of the high-affinity ATP-driven potassium transport (or Kdp) system, which catalyzes the hydrolysis of ATP coupled with the electrogenic transport of potassium into the cytoplasm. This subunit is responsible for energy coupling to the transport system and for the release of the potassium ions to the cytoplasm. The chain is Potassium-transporting ATPase ATP-binding subunit from Escherichia coli O9:H4 (strain HS).